Here is a 194-residue protein sequence, read N- to C-terminus: UPF0301 protein FTA_1286 (194 aa).

Belongs to the UPF0301 (AlgH) family.

This is UPF0301 protein FTA_1286 from Francisella tularensis subsp. holarctica (strain FTNF002-00 / FTA).